We begin with the raw amino-acid sequence, 255 residues long: MNINKIALIYNHNSKHLAIIEEIKQLYNYCKIEEAEVIIVIGGDGELLHNIHRYMHLNIPFYGVNLGSLGFLMNPLDTKKLLQNIHESTVSILNPLLMQVEDTSGQIYTALAINEVSIFRKTNQAAKFRIEVNGIERMSELVADGALVATPAGSSAYNLSASGPILPLESNMLCLTPICSFRPRRWHGALLLSSATIKFEILNTNKRPVNATADFQEFNNITNVTVKSTKDKPVKLLFNKNHTLEDRIIKEQFGG.

Asp44 (proton acceptor) is an active-site residue. NAD(+) is bound by residues 44–45 (DG), His49, 114–115 (NE), Asp144, Ala152, 155–160 (SAYNLS), and Gln216.

Belongs to the NAD kinase family. The cofactor is a divalent metal cation.

It localises to the cytoplasm. The enzyme catalyses NAD(+) + ATP = ADP + NADP(+) + H(+). Involved in the regulation of the intracellular balance of NAD and NADP, and is a key enzyme in the biosynthesis of NADP. Catalyzes specifically the phosphorylation on 2'-hydroxyl of the adenosine moiety of NAD to yield NADP. This chain is NAD kinase, found in Rickettsia africae (strain ESF-5).